The primary structure comprises 380 residues: Cytochrome b (380 aa).

A run of 4 helical transmembrane segments spans residues 33–53 (FGSL…FLAM), 77–98 (WTIR…FLHI), 113–133 (WNIG…GYVL), and 178–198 (FFTF…LHLL). Heme b-binding residues include His-83 and His-97. Positions 182 and 196 each coordinate heme b. His-201 serves as a coordination point for a ubiquinone. A run of 4 helical transmembrane segments spans residues 226–246 (IKDI…TLFS), 288–308 (LGGV…PILH), 320–340 (LSQL…WIGG), and 347–367 (FITI…FLMP).

This sequence belongs to the cytochrome b family. As to quaternary structure, the cytochrome bc1 complex contains 11 subunits: 3 respiratory subunits (MT-CYB, CYC1 and UQCRFS1), 2 core proteins (UQCRC1 and UQCRC2) and 6 low-molecular weight proteins (UQCRH/QCR6, UQCRB/QCR7, UQCRQ/QCR8, UQCR10/QCR9, UQCR11/QCR10 and a cleavage product of UQCRFS1). This cytochrome bc1 complex then forms a dimer. Heme b serves as cofactor.

The protein localises to the mitochondrion inner membrane. In terms of biological role, component of the ubiquinol-cytochrome c reductase complex (complex III or cytochrome b-c1 complex) that is part of the mitochondrial respiratory chain. The b-c1 complex mediates electron transfer from ubiquinol to cytochrome c. Contributes to the generation of a proton gradient across the mitochondrial membrane that is then used for ATP synthesis. The polypeptide is Cytochrome b (MT-CYB) (Gorilla gorilla gorilla (Western lowland gorilla)).